A 496-amino-acid polypeptide reads, in one-letter code: Lysine--tRNA ligase (496 aa).

E408 and E415 together coordinate Mg(2+).

The protein belongs to the class-II aminoacyl-tRNA synthetase family. In terms of assembly, homodimer. It depends on Mg(2+) as a cofactor.

Its subcellular location is the cytoplasm. The catalysed reaction is tRNA(Lys) + L-lysine + ATP = L-lysyl-tRNA(Lys) + AMP + diphosphate. The chain is Lysine--tRNA ligase from Legionella pneumophila (strain Corby).